The following is a 270-amino-acid chain: S-methyl-5'-thioadenosine phosphorylase (270 aa).

Phosphate-binding positions include Ser-16, 58 to 59 (RH), and 91 to 92 (SA). Intrachain disulfides connect Cys-138/Cys-205, Cys-200/Cys-262, and Cys-259/Cys-261. Met-190 provides a ligand contact to substrate. Thr-191 lines the phosphate pocket. 214-216 (DYD) contacts substrate.

It belongs to the PNP/MTAP phosphorylase family. MTAP subfamily. In terms of assembly, homohexamer. Dimer of a homotrimer.

The catalysed reaction is S-methyl-5'-thioadenosine + phosphate = 5-(methylsulfanyl)-alpha-D-ribose 1-phosphate + adenine. Its pathway is amino-acid biosynthesis; L-methionine biosynthesis via salvage pathway; S-methyl-5-thio-alpha-D-ribose 1-phosphate from S-methyl-5'-thioadenosine (phosphorylase route): step 1/1. In terms of biological role, catalyzes the reversible phosphorylation of S-methyl-5'-thioadenosine (MTA) to adenine and 5-methylthioribose-1-phosphate. Involved in the breakdown of MTA, a major by-product of polyamine biosynthesis. Responsible for the first step in the methionine salvage pathway after MTA has been generated from S-adenosylmethionine. Has broad substrate specificity with 6-aminopurine nucleosides as preferred substrates. The chain is S-methyl-5'-thioadenosine phosphorylase from Saccharolobus solfataricus (strain ATCC 35092 / DSM 1617 / JCM 11322 / P2) (Sulfolobus solfataricus).